We begin with the raw amino-acid sequence, 248 residues long: 2,3-bisphosphoglycerate-dependent phosphoglycerate mutase (248 aa).

Substrate-binding positions include Arg-8–Asn-15, Thr-21–Gly-22, Arg-60, Glu-87–Tyr-90, Lys-98, Arg-114–Arg-115, and Gly-183–Asn-184. Catalysis depends on His-9, which acts as the Tele-phosphohistidine intermediate. Glu-87 functions as the Proton donor/acceptor in the catalytic mechanism.

This sequence belongs to the phosphoglycerate mutase family. BPG-dependent PGAM subfamily. As to quaternary structure, homodimer.

It catalyses the reaction (2R)-2-phosphoglycerate = (2R)-3-phosphoglycerate. It participates in carbohydrate degradation; glycolysis; pyruvate from D-glyceraldehyde 3-phosphate: step 3/5. Functionally, catalyzes the interconversion of 2-phosphoglycerate and 3-phosphoglycerate. This chain is 2,3-bisphosphoglycerate-dependent phosphoglycerate mutase, found in Burkholderia ambifaria (strain ATCC BAA-244 / DSM 16087 / CCUG 44356 / LMG 19182 / AMMD) (Burkholderia cepacia (strain AMMD)).